A 724-amino-acid chain; its full sequence is Protein arginine N-methyltransferase 1.6 (724 aa).

SAM-dependent MTase PRMT-type domains follow at residues 61–388 (NDQP…YNLK) and 395–721 (HERT…IVTH). Residues glutamate 183 and glutamate 192 contribute to the active site.

Belongs to the class I-like SAM-binding methyltransferase superfamily. Protein arginine N-methyltransferase family. PRMT7 subfamily.

In terms of biological role, arginine methyltransferase that can both catalyze the formation of omega-N monomethylarginine (MMA) and symmetrical dimethylarginine (sDMA). This is Protein arginine N-methyltransferase 1.6 (PRMT16) from Arabidopsis thaliana (Mouse-ear cress).